Here is a 193-residue protein sequence, read N- to C-terminus: MQDFLLVLLSTALVNNVVLVKFLGLCPFMGVSRKTDAAIGMGLATTFVITVASAACWLVEALILEPLDLKFLRILSMILVIAAIVQFIETVMRKVTPDLHKALGIYLPLITTNCAVLGLPLMYIQGHLSLAMSTLSGFGASVGFTLVLVIFAGMRERLAQLSVPAAFAGTPIAFVSAGLLGLAFMGFAGLVHV.

6 helical membrane passes run 4–24 (FLLVLLSTALVNNVVLVKFLG), 39–59 (IGMGLATTFVITVASAACWLV), 71–91 (FLRILSMILVIAAIVQFIETV), 102–122 (ALGIYLPLITTNCAVLGLPLM), 134–154 (TLSGFGASVGFTLVLVIFAGM), and 171–191 (PIAFVSAGLLGLAFMGFAGLV).

Belongs to the NqrDE/RnfAE family. The complex is composed of six subunits: RnfA, RnfB, RnfC, RnfD, RnfE and RnfG.

It localises to the cellular chromatophore membrane. Part of a membrane-bound complex that couples electron transfer with translocation of ions across the membrane. Required for nitrogen fixation. Involved in electron transfer to nitrogenase. The protein is Ion-translocating oxidoreductase complex subunit A of Rhodobacter capsulatus (Rhodopseudomonas capsulata).